The sequence spans 277 residues: Tetrahydroxynaphthalene reductase PfmaG (277 aa).

3 residues coordinate NADP(+): Ile36, Asp82, and Asn109. Catalysis depends on proton donor residues Ser158, Ser159, and Tyr173. NADP(+) is bound by residues Tyr173, Lys177, Ile206, and Thr208. Lys177 acts as the Lowers pKa of active site Tyr in catalysis.

The protein belongs to the short-chain dehydrogenases/reductases (SDR) family.

The enzyme catalyses scytalone + NADP(+) = naphthalene-1,3,6,8-tetrol + NADPH + H(+). It participates in pigment biosynthesis; melanin biosynthesis. Functionally, tetrahydroxynaphthalene reductase; part of the gene cluster that mediates the biosynthesis of dihydroxynaphthalene (DHN)-melanin, a bluish-green pigment forming a dark layer in the conidial wall that protects the conidia from UV radiations. The first step of the pathway is the production of the pentaketide 1,3,6,8-tetrahydroxynaphthalene (1,3,6,8-THN or T4HN) by the polyketide synthase PfmaE though condensation of acetyl-CoA with malonyl-CoA. T4HN is not stable and easily oxidizes into the stable form flaviolin. T4HN is also substrate of the hydroxynaphthalene reductase PfmaG to yield scytalone. The scytalone dehydratase PfmaJ then reduces scytalone to 1,3,8-THN. 1,3,8-THN is then substrate of the hydroxynaphthalene reductase PfmaI to yield vermelone. Vermelone is further converted by the multicopper oxidase PfmaD to 1,8-DHN. Finally the laccase PFICI_06862 transforms 1,8-DHN to DHN-melanin. The roles of the 5-oxoprolinase PfmaA and the proline iminopeptidase PfmaB within the cluster have not been elucidated yet. This is Tetrahydroxynaphthalene reductase PfmaG from Pestalotiopsis fici (strain W106-1 / CGMCC3.15140).